Here is a 24-residue protein sequence, read N- to C-terminus: Coenzyme PQQ synthesis protein A (24 aa).

Residues Glu-16–Tyr-20 constitute a cross-link (pyrroloquinoline quinone (Glu-Tyr)).

It belongs to the PqqA family.

Its pathway is cofactor biosynthesis; pyrroloquinoline quinone biosynthesis. In terms of biological role, required for coenzyme pyrroloquinoline quinone (PQQ) biosynthesis. PQQ is probably formed by cross-linking a specific glutamate to a specific tyrosine residue and excising these residues from the peptide. The protein is Coenzyme PQQ synthesis protein A of Acinetobacter baumannii (strain SDF).